We begin with the raw amino-acid sequence, 475 residues long: UDP-N-acetylmuramate--L-alanine ligase (475 aa).

114 to 120 (GTHGKTT) contacts ATP.

This sequence belongs to the MurCDEF family.

It is found in the cytoplasm. It catalyses the reaction UDP-N-acetyl-alpha-D-muramate + L-alanine + ATP = UDP-N-acetyl-alpha-D-muramoyl-L-alanine + ADP + phosphate + H(+). The protein operates within cell wall biogenesis; peptidoglycan biosynthesis. Its function is as follows. Cell wall formation. This chain is UDP-N-acetylmuramate--L-alanine ligase, found in Bartonella henselae (strain ATCC 49882 / DSM 28221 / CCUG 30454 / Houston 1) (Rochalimaea henselae).